The primary structure comprises 230 residues: Orotidine 5'-phosphate decarboxylase (230 aa).

Substrate-binding positions include Asp-11, Lys-34, 61–70 (DLKLHDIPNT), Thr-117, Arg-179, Gln-188, Gly-208, and Arg-209. Lys-63 serves as the catalytic Proton donor.

Belongs to the OMP decarboxylase family. Type 1 subfamily. As to quaternary structure, homodimer.

It carries out the reaction orotidine 5'-phosphate + H(+) = UMP + CO2. Its pathway is pyrimidine metabolism; UMP biosynthesis via de novo pathway; UMP from orotate: step 2/2. Functionally, catalyzes the decarboxylation of orotidine 5'-monophosphate (OMP) to uridine 5'-monophosphate (UMP). In Streptococcus pyogenes serotype M18 (strain MGAS8232), this protein is Orotidine 5'-phosphate decarboxylase.